An 840-amino-acid chain; its full sequence is Phosphatidylglycerol lysyltransferase (840 aa).

Topologically, residues 1–8 are cytoplasmic; sequence MTEELKNR. A helical transmembrane segment spans residues 9–29; it reads LLSILKFVFAAVLFIAVVATL. The Extracellular portion of the chain corresponds to 30 to 52; sequence YHELAHINFKQTLEAFSKINRWY. Residues 53–73 form a helical membrane-spanning segment; it reads LVGLFICGGSAMILLSLYDLI. Residues 74–89 are Cytoplasmic-facing; that stretch reads LVKGLKLDIPLIRVFK. A helical membrane pass occupies residues 90–110; the sequence is ISYIINALNAIVGFGGFIGAG. Residues 111–129 are Extracellular-facing; that stretch reads FRAFIYKNYTTDRKKLVHA. Residues 130 to 150 form a helical membrane-spanning segment; sequence ISIILISMLMGLSLLSILVVL. The Cytoplasmic segment spans residues 151–167; the sequence is HIFDASHIINKVSWVRW. A helical transmembrane segment spans residues 168–188; the sequence is ILYVVALFLPLFIAYTMINPI. Topologically, residues 189 to 193 are extracellular; the sequence is DRNNK. A helical membrane pass occupies residues 194–216; the sequence is YLGVYCTLVSSFEWLAAATVLYL. Residues 217–229 lie on the Cytoplasmic side of the membrane; sequence STVIVDINIAFTT. The helical transmembrane segment at 230 to 250 threads the bilayer; sequence VIGIFIIAALSGLVSFIPGGF. Residues 251-271 are Extracellular-facing; it reads GAFDLVVLLGLKSLGVPEEKV. Residues 272 to 292 form a helical membrane-spanning segment; sequence LLALLLYRFAYYFVPVIIALI. The Cytoplasmic segment spans residues 293 to 335; that stretch reads LSTFEFGSSARKYFEESKYFVPARDVTSFLFSYQKDIIAKIPS. The chain crosses the membrane as a helical span at residues 336-356; it reads FALATLVLITSFVFFINNITI. Residues 357 to 366 lie on the Extracellular side of the membrane; it reads VYDGLYDDHH. Residues 367–387 traverse the membrane as a helical segment; the sequence is FAYYIMLSVHTSACLLLLINV. Residues 388–394 lie on the Cytoplasmic side of the membrane; sequence RGVFKQS. The next 2 membrane-spanning stretches (helical) occupy residues 395 to 415 and 416 to 436; these read RRAI…TIYT and YASL…ILAY. At 437 to 450 the chain is on the cytoplasmic side; the sequence is RRSKVMKRPFRLKR. Residues 451-471 traverse the membrane as a helical segment; the sequence is LIFTIILSMLVLYVNHFIISE. Over 472–490 the chain is Extracellular; that stretch reads TLYALDIYHIEMDTSLLKY. The helical transmembrane segment at 491–511 threads the bilayer; that stretch reads YFWLTILVVVILVGIVAWLLG. At 512-840 the chain is on the cytoplasmic side; sequence SRYTRPHQLE…LKVMRVIRHK (329 aa).

It belongs to the LPG synthase family.

It is found in the cell membrane. The enzyme catalyses L-lysyl-tRNA(Lys) + a 1,2-diacyl-sn-glycero-3-phospho-(1'-sn-glycerol) = a 1,2-diacyl-sn-glycero-3-phospho-1'-(3'-O-L-lysyl)-sn-glycerol + tRNA(Lys). In terms of biological role, catalyzes the transfer of a lysyl group from L-lysyl-tRNA(Lys) to membrane-bound phosphatidylglycerol (PG), which produces lysylphosphatidylglycerol (LPG), a major component of the bacterial membrane with a positive net charge. LPG synthesis contributes to bacterial virulence as it is involved in the resistance mechanism against cationic antimicrobial peptides (CAMP) produces by the host's immune system (defensins, cathelicidins) and by the competing microorganisms (bacteriocins). In fact, the modification of anionic phosphatidylglycerol with positively charged L-lysine results in repulsion of the peptides. The protein is Phosphatidylglycerol lysyltransferase (mprF) of Staphylococcus haemolyticus (strain JCSC1435).